The chain runs to 91 residues: Small ribosomal subunit protein uS19 (91 aa).

The protein belongs to the universal ribosomal protein uS19 family.

Functionally, protein S19 forms a complex with S13 that binds strongly to the 16S ribosomal RNA. The sequence is that of Small ribosomal subunit protein uS19 from Saccharophagus degradans (strain 2-40 / ATCC 43961 / DSM 17024).